Reading from the N-terminus, the 352-residue chain is Alpha-2-HS-glycoprotein (352 aa).

The signal sequence occupies residues 1–18; it reads MKSLVLLLCFAQLWSCQS. Residues 19 to 133 enclose the Cystatin fetuin-A-type 1 domain; it reads APQGAGLGFR…QFRVLHAQCH (115 aa). 6 cysteine pairs are disulfide-bonded: Cys-32–Cys-343, Cys-89–Cys-100, Cys-114–Cys-132, Cys-146–Cys-149, Cys-208–Cys-219, and Cys-230–Cys-247. Asn-99 carries an N-linked (GlcNAc...) asparagine glycan. A Phosphoserine modification is found at Ser-134. Residue Thr-135 is modified to Phosphothreonine. Phosphoserine is present on Ser-138. In terms of domain architecture, Cystatin fetuin-A-type 2 spans 144-250; that stretch reads KFCPRCPILI…EEVSVACKLF (107 aa). Residues Asn-156 and Asn-176 are each glycosylated (N-linked (GlcNAc...) asparagine). The span at 256–273 shows a compositional bias: low complexity; sequence PANANPAGPAPTVGQAAP. The disordered stretch occupies residues 256 to 280; sequence PANANPAGPAPTVGQAAPVAPPAGP. 4 positions are modified to phosphoserine: Ser-309, Ser-313, Ser-316, and Ser-318. The interval 319-338 is disordered; sequence GEVLHSPKVGQPGDAGAAGP. The segment covering 328–338 has biased composition (low complexity); that stretch reads GQPGDAGAAGP.

The protein belongs to the fetuin family. Undergoes complex post-translational modification involving N-glycosylation, and addition of fucose and sialic acid residues. Phosphorylation occurs at a serine residue. Post-translationally, phosphorylated by FAM20C in the extracellular medium. Synthesized in liver and secreted by the hepatocytes in the blood.

The protein resides in the secreted. In terms of biological role, could inhibit both insulin-receptor tyrosine kinase activity and insulin-stimulated receptor autophosphorylation and, concomitantly, antagonize the mitogenic effect of the hormone in cultured rat hepatoma cells. This Rattus norvegicus (Rat) protein is Alpha-2-HS-glycoprotein (Ahsg).